A 62-amino-acid chain; its full sequence is MGTIEDVVEFLRFNGVIKGNTVSYNGIIHYAESVSIILGLSPEESIKQLLSYLNKNGYVVVG.

This is an uncharacterized protein from Sulfolobus islandicus filamentous virus (isolate Iceland/Hveragerdi) (SIFV).